The sequence spans 344 residues: Phosphoribosylformylglycinamidine cyclo-ligase (344 aa).

The protein belongs to the AIR synthase family.

The protein resides in the cytoplasm. It catalyses the reaction 2-formamido-N(1)-(5-O-phospho-beta-D-ribosyl)acetamidine + ATP = 5-amino-1-(5-phospho-beta-D-ribosyl)imidazole + ADP + phosphate + H(+). It functions in the pathway purine metabolism; IMP biosynthesis via de novo pathway; 5-amino-1-(5-phospho-D-ribosyl)imidazole from N(2)-formyl-N(1)-(5-phospho-D-ribosyl)glycinamide: step 2/2. This is Phosphoribosylformylglycinamidine cyclo-ligase from Leptospira interrogans serogroup Icterohaemorrhagiae serovar Lai (strain 56601).